We begin with the raw amino-acid sequence, 325 residues long: DNA-directed RNA polymerase subunit alpha (325 aa).

The tract at residues 1 to 231 (MQTSLLKPKI…DQLSVFAALE (231 aa)) is alpha N-terminal domain (alpha-NTD). The alpha C-terminal domain (alpha-CTD) stretch occupies residues 246–325 (IDPILLRPVD…ENWPPAGLDK (80 aa)).

It belongs to the RNA polymerase alpha chain family. As to quaternary structure, homodimer. The RNAP catalytic core consists of 2 alpha, 1 beta, 1 beta' and 1 omega subunit. When a sigma factor is associated with the core the holoenzyme is formed, which can initiate transcription.

The catalysed reaction is RNA(n) + a ribonucleoside 5'-triphosphate = RNA(n+1) + diphosphate. In terms of biological role, DNA-dependent RNA polymerase catalyzes the transcription of DNA into RNA using the four ribonucleoside triphosphates as substrates. This is DNA-directed RNA polymerase subunit alpha from Burkholderia mallei (strain NCTC 10247).